Consider the following 172-residue polypeptide: Ribosome maturation factor RimM (172 aa).

The PRC barrel domain occupies 96-168 (EGEFYYHQII…RVDVELMEGL (73 aa)).

This sequence belongs to the RimM family. In terms of assembly, binds ribosomal protein uS19.

The protein resides in the cytoplasm. In terms of biological role, an accessory protein needed during the final step in the assembly of 30S ribosomal subunit, possibly for assembly of the head region. Essential for efficient processing of 16S rRNA. May be needed both before and after RbfA during the maturation of 16S rRNA. It has affinity for free ribosomal 30S subunits but not for 70S ribosomes. The polypeptide is Ribosome maturation factor RimM (Streptococcus pyogenes serotype M1).